Consider the following 178-residue polypeptide: Ribosome maturation factor RimP (178 aa).

The protein belongs to the RimP family.

The protein resides in the cytoplasm. Required for maturation of 30S ribosomal subunits. The polypeptide is Ribosome maturation factor RimP (Streptococcus pyogenes serotype M1).